We begin with the raw amino-acid sequence, 193 residues long: Xanthine phosphoribosyltransferase (193 aa).

Residues L20 and T27 each contribute to the xanthine site. Position 128 to 132 (128 to 132 (ANGQA)) interacts with 5-phospho-alpha-D-ribose 1-diphosphate. K156 contacts xanthine.

It belongs to the purine/pyrimidine phosphoribosyltransferase family. Xpt subfamily. In terms of assembly, homodimer.

The protein resides in the cytoplasm. It carries out the reaction XMP + diphosphate = xanthine + 5-phospho-alpha-D-ribose 1-diphosphate. Its pathway is purine metabolism; XMP biosynthesis via salvage pathway; XMP from xanthine: step 1/1. Its function is as follows. Converts the preformed base xanthine, a product of nucleic acid breakdown, to xanthosine 5'-monophosphate (XMP), so it can be reused for RNA or DNA synthesis. In Streptococcus pneumoniae (strain P1031), this protein is Xanthine phosphoribosyltransferase.